A 37-amino-acid chain; its full sequence is Potassium channel toxin alpha-KTx 11.2 (37 aa).

Cystine bridges form between Cys-8-Cys-27, Cys-13-Cys-33, and Cys-17-Cys-35.

It belongs to the short scorpion toxin superfamily. Potassium channel inhibitor family. Alpha-KTx 11 subfamily. In terms of tissue distribution, expressed by the venom gland.

The protein localises to the secreted. In terms of biological role, binds and inhibits voltage-sensitive potassium channels. Inhibits the vertebrate potassium channel Kv1.1/KCNA1 with low affinity. This Parabuthus villosus (Black hairy thick-tailed scorpion) protein is Potassium channel toxin alpha-KTx 11.2.